A 455-amino-acid polypeptide reads, in one-letter code: Ribosomal protein uS12 methylthiotransferase RimO (455 aa).

In terms of domain architecture, MTTase N-terminal spans 1–114 (MKYHIVTLGC…INALVGQLER (114 aa)). [4Fe-4S] cluster contacts are provided by C10, C46, C78, C166, C170, and C173. Positions 152 to 383 (THQTPSAYLK…MRLQQTISYT (232 aa)) constitute a Radical SAM core domain. The region spanning 386–455 (QRWVGRTIKV…AYDLWGEALS (70 aa)) is the TRAM domain.

Belongs to the methylthiotransferase family. RimO subfamily. It depends on [4Fe-4S] cluster as a cofactor.

The protein localises to the cytoplasm. The catalysed reaction is L-aspartate(89)-[ribosomal protein uS12]-hydrogen + (sulfur carrier)-SH + AH2 + 2 S-adenosyl-L-methionine = 3-methylsulfanyl-L-aspartate(89)-[ribosomal protein uS12]-hydrogen + (sulfur carrier)-H + 5'-deoxyadenosine + L-methionine + A + S-adenosyl-L-homocysteine + 2 H(+). Functionally, catalyzes the methylthiolation of an aspartic acid residue of ribosomal protein uS12. The sequence is that of Ribosomal protein uS12 methylthiotransferase RimO from Chloroflexus aurantiacus (strain ATCC 29366 / DSM 635 / J-10-fl).